A 185-amino-acid chain; its full sequence is dCTP deaminase (185 aa).

DCTP contacts are provided by residues 107 to 112 (KSTYAR), 131 to 133 (TLE), Q152, Y166, and Q176. Residue E133 is the Proton donor/acceptor of the active site.

Belongs to the dCTP deaminase family. Homotrimer.

It catalyses the reaction dCTP + H2O + H(+) = dUTP + NH4(+). It participates in pyrimidine metabolism; dUMP biosynthesis; dUMP from dCTP (dUTP route): step 1/2. In terms of biological role, catalyzes the deamination of dCTP to dUTP. The chain is dCTP deaminase from Anaplasma phagocytophilum (strain HZ).